Reading from the N-terminus, the 238-residue chain is tRNA (guanine-N(1)-)-methyltransferase (238 aa).

132 to 137 serves as a coordination point for S-adenosyl-L-methionine; it reads IGDYVL.

It belongs to the RNA methyltransferase TrmD family. As to quaternary structure, homodimer.

The protein resides in the cytoplasm. It catalyses the reaction guanosine(37) in tRNA + S-adenosyl-L-methionine = N(1)-methylguanosine(37) in tRNA + S-adenosyl-L-homocysteine + H(+). In terms of biological role, specifically methylates guanosine-37 in various tRNAs. This is tRNA (guanine-N(1)-)-methyltransferase from Nitrobacter hamburgensis (strain DSM 10229 / NCIMB 13809 / X14).